A 204-amino-acid chain; its full sequence is Guanylate kinase (204 aa).

Residues 4-182 (GLLYVISAPS…ALNQLRAIVQ (179 aa)) enclose the Guanylate kinase-like domain. Position 11-18 (11-18 (APSGAGKT)) interacts with ATP.

The protein belongs to the guanylate kinase family.

It is found in the cytoplasm. The catalysed reaction is GMP + ATP = GDP + ADP. Essential for recycling GMP and indirectly, cGMP. This is Guanylate kinase from Methylococcus capsulatus (strain ATCC 33009 / NCIMB 11132 / Bath).